Reading from the N-terminus, the 174-residue chain is Peptide methionine sulfoxide reductase MsrA (174 aa).

Cys10 is an active-site residue.

It belongs to the MsrA Met sulfoxide reductase family.

The catalysed reaction is L-methionyl-[protein] + [thioredoxin]-disulfide + H2O = L-methionyl-(S)-S-oxide-[protein] + [thioredoxin]-dithiol. It catalyses the reaction [thioredoxin]-disulfide + L-methionine + H2O = L-methionine (S)-S-oxide + [thioredoxin]-dithiol. Its function is as follows. Has an important function as a repair enzyme for proteins that have been inactivated by oxidation. Catalyzes the reversible oxidation-reduction of methionine sulfoxide in proteins to methionine. This chain is Peptide methionine sulfoxide reductase MsrA, found in Acinetobacter baumannii (strain SDF).